The following is a 678-amino-acid chain: UvrABC system protein B (678 aa).

The Helicase ATP-binding domain occupies 31–417 (EGLENGLAHQ…KSGGEIIDQV (387 aa)). Residue 44 to 51 (GVTGSGKT) participates in ATP binding. Positions 97-120 (YYDYYQPEAYVPSSDTFIEKDASI) match the Beta-hairpin motif. The Helicase C-terminal domain occupies 436 to 589 (QVDDLLSEAR…QMKYNEARGI (154 aa)). The region spanning 638 to 673 (QQQIKKLEQQMYKYAQDLEFEKAAAVRDQLQQLREH) is the UVR domain.

Belongs to the UvrB family. Forms a heterotetramer with UvrA during the search for lesions. Interacts with UvrC in an incision complex.

It localises to the cytoplasm. The UvrABC repair system catalyzes the recognition and processing of DNA lesions. A damage recognition complex composed of 2 UvrA and 2 UvrB subunits scans DNA for abnormalities. Upon binding of the UvrA(2)B(2) complex to a putative damaged site, the DNA wraps around one UvrB monomer. DNA wrap is dependent on ATP binding by UvrB and probably causes local melting of the DNA helix, facilitating insertion of UvrB beta-hairpin between the DNA strands. Then UvrB probes one DNA strand for the presence of a lesion. If a lesion is found the UvrA subunits dissociate and the UvrB-DNA preincision complex is formed. This complex is subsequently bound by UvrC and the second UvrB is released. If no lesion is found, the DNA wraps around the other UvrB subunit that will check the other stand for damage. This chain is UvrABC system protein B, found in Pasteurella multocida (strain Pm70).